The chain runs to 426 residues: Phosphomethylpyrimidine synthase (426 aa).

Substrate contacts are provided by residues Asn65, Met94, Tyr123, His162, 184–186 (SRG), 225–228 (DGMR), and Glu264. His268 serves as a coordination point for Zn(2+). Tyr291 lines the substrate pocket. A Zn(2+)-binding site is contributed by His332. Residues Cys408, Cys411, and Cys415 each contribute to the [4Fe-4S] cluster site.

The protein belongs to the ThiC family. Requires [4Fe-4S] cluster as cofactor.

The catalysed reaction is 5-amino-1-(5-phospho-beta-D-ribosyl)imidazole + S-adenosyl-L-methionine = 4-amino-2-methyl-5-(phosphooxymethyl)pyrimidine + CO + 5'-deoxyadenosine + formate + L-methionine + 3 H(+). Its pathway is cofactor biosynthesis; thiamine diphosphate biosynthesis. In terms of biological role, catalyzes the synthesis of the hydroxymethylpyrimidine phosphate (HMP-P) moiety of thiamine from aminoimidazole ribotide (AIR) in a radical S-adenosyl-L-methionine (SAM)-dependent reaction. The sequence is that of Phosphomethylpyrimidine synthase from Methanococcus maripaludis (strain C6 / ATCC BAA-1332).